Reading from the N-terminus, the 57-residue chain is Preprotein translocase subunit SecG (57 aa).

Over 1–33 (MARRRRYEGLNPFVAAGLIKFSEEGELERIKLT) the chain is Cytoplasmic. The helical transmembrane segment at 34-55 (PKSAVVISVALIAAILVLNLIH) threads the bilayer. The Extracellular segment spans residues 56-57 (PL).

Belongs to the SEC61-beta family. Component of the protein translocase complex. Heterotrimer consisting of alpha (SecY), beta (SecG) and gamma (SecE) subunits. Can form oligomers of the heterotrimer.

The protein resides in the cell membrane. Functionally, involved in protein export. The function of the beta subunit is unknown, but it may be involved in stabilization of the trimeric complex. This chain is Preprotein translocase subunit SecG, found in Pyrobaculum neutrophilum (strain DSM 2338 / JCM 9278 / NBRC 100436 / V24Sta) (Thermoproteus neutrophilus).